A 344-amino-acid chain; its full sequence is Probable Delta(7)-sterol 5(6)-desaturase (344 aa).

Helical transmembrane passes span 76–96, 123–143, and 160–180; these read LSLFLILWLFGLVTYYVFASL, QTNAALPVMAFFTFPFLVAEV, and WYDFFQFPLFIMFTDFGIYWI. Residues 167 to 292 form the Fatty acid hydroxylase domain; it reads PLFIMFTDFG…FTTLWDRLGG (126 aa). A Histidine box-1 motif is present at residues 181–185; it reads HRGLH. The Histidine box-2 motif lies at 194–198; it reads HKPHH. The helical transmembrane segment at 224-244 threads the bilayer; sequence HIFPFIFPLQKMAYVGLFVFI. Residues 269–273 carry the Histidine box-3 motif; it reads HSVHH.

It belongs to the sterol desaturase family. It depends on Fe cation as a cofactor.

It localises to the endoplasmic reticulum membrane. The enzyme catalyses a Delta(7)-sterol + 2 Fe(II)-[cytochrome b5] + O2 + 2 H(+) = a Delta(5),Delta(7)-sterol + 2 Fe(III)-[cytochrome b5] + 2 H2O. Its pathway is steroid metabolism; ergosterol biosynthesis; ergosterol from zymosterol: step 3/5. Functionally, catalyzes the introduction of a C-5 double bond in the B ring of ergosterol. May contribute to the regulation of ergosterol biosynthesis. The polypeptide is Probable Delta(7)-sterol 5(6)-desaturase (Neurospora crassa (strain ATCC 24698 / 74-OR23-1A / CBS 708.71 / DSM 1257 / FGSC 987)).